Consider the following 347-residue polypeptide: Phosphoribosylformylglycinamidine cyclo-ligase (347 aa).

This sequence belongs to the AIR synthase family.

It localises to the cytoplasm. It catalyses the reaction 2-formamido-N(1)-(5-O-phospho-beta-D-ribosyl)acetamidine + ATP = 5-amino-1-(5-phospho-beta-D-ribosyl)imidazole + ADP + phosphate + H(+). It participates in purine metabolism; IMP biosynthesis via de novo pathway; 5-amino-1-(5-phospho-D-ribosyl)imidazole from N(2)-formyl-N(1)-(5-phospho-D-ribosyl)glycinamide: step 2/2. The protein is Phosphoribosylformylglycinamidine cyclo-ligase of Prochlorococcus marinus (strain MIT 9312).